A 203-amino-acid chain; its full sequence is Ribosomal RNA large subunit methyltransferase E (203 aa).

Positions 59, 61, 79, 97, and 119 each coordinate S-adenosyl-L-methionine. Residue K159 is the Proton acceptor of the active site.

Belongs to the class I-like SAM-binding methyltransferase superfamily. RNA methyltransferase RlmE family.

The protein resides in the cytoplasm. It carries out the reaction uridine(2552) in 23S rRNA + S-adenosyl-L-methionine = 2'-O-methyluridine(2552) in 23S rRNA + S-adenosyl-L-homocysteine + H(+). Specifically methylates the uridine in position 2552 of 23S rRNA at the 2'-O position of the ribose in the fully assembled 50S ribosomal subunit. The protein is Ribosomal RNA large subunit methyltransferase E of Desulforapulum autotrophicum (strain ATCC 43914 / DSM 3382 / VKM B-1955 / HRM2) (Desulfobacterium autotrophicum).